A 533-amino-acid polypeptide reads, in one-letter code: Probable galacturonosyltransferase 13 (533 aa).

Residues 1-40 (MQLHISPSMRSITISSSNEFIDLMKIKVAARHISYRTLFH) are Cytoplasmic-facing. Residues 41 to 61 (TILILAFLLPFVFILTAVVTL) form a helical; Signal-anchor for type II membrane protein membrane-spanning segment. Over 62-533 (EGVNKCSSFD…DFIKNCHILE (472 aa)) the chain is Lumenal. Residues Asn306, Asn396, Asn445, and Asn520 are each glycosylated (N-linked (GlcNAc...) asparagine).

The protein belongs to the glycosyltransferase 8 family. In terms of tissue distribution, expressed in roots, inflorescences, siliques, leaves and stems. Accumulates in pollen grains.

The protein resides in the golgi apparatus membrane. It participates in glycan metabolism; pectin biosynthesis. In terms of biological role, may be involved in pectin and/or xylans biosynthesis in cell walls. Together with GAUT14, required for pollen tube growth, possibly through the regulation of pectin biosynthesis and repartition in the pollen tube wall. This Arabidopsis thaliana (Mouse-ear cress) protein is Probable galacturonosyltransferase 13.